The following is a 122-amino-acid chain: Large ribosomal subunit protein uL14 (122 aa).

The protein belongs to the universal ribosomal protein uL14 family. Part of the 50S ribosomal subunit. Forms a cluster with proteins L3 and L19. In the 70S ribosome, L14 and L19 interact and together make contacts with the 16S rRNA in bridges B5 and B8.

In terms of biological role, binds to 23S rRNA. Forms part of two intersubunit bridges in the 70S ribosome. This chain is Large ribosomal subunit protein uL14, found in Paramagnetospirillum magneticum (strain ATCC 700264 / AMB-1) (Magnetospirillum magneticum).